A 76-amino-acid polypeptide reads, in one-letter code: DNA-directed RNA polymerase subunit epsilon (76 aa).

It belongs to the RNA polymerase subunit epsilon family. As to quaternary structure, RNAP is composed of a core of 2 alpha, a beta and a beta' subunit. The core is associated with a delta subunit, and at least one of epsilon or omega. When a sigma factor is associated with the core the holoenzyme is formed, which can initiate transcription.

The catalysed reaction is RNA(n) + a ribonucleoside 5'-triphosphate = RNA(n+1) + diphosphate. Its function is as follows. A non-essential component of RNA polymerase (RNAP). This is DNA-directed RNA polymerase subunit epsilon from Streptococcus agalactiae serotype Ia (strain ATCC 27591 / A909 / CDC SS700).